Consider the following 77-residue polypeptide: Exodeoxyribonuclease 7 small subunit (77 aa).

Belongs to the XseB family. In terms of assembly, heterooligomer composed of large and small subunits.

It is found in the cytoplasm. It carries out the reaction Exonucleolytic cleavage in either 5'- to 3'- or 3'- to 5'-direction to yield nucleoside 5'-phosphates.. Functionally, bidirectionally degrades single-stranded DNA into large acid-insoluble oligonucleotides, which are then degraded further into small acid-soluble oligonucleotides. This Lysinibacillus sphaericus (strain C3-41) protein is Exodeoxyribonuclease 7 small subunit.